A 417-amino-acid chain; its full sequence is Sterile alpha motif domain-containing protein 14 (417 aa).

The segment at 37–306 (LLVKGRRHRP…QETKCSYPYH (270 aa)) is disordered. Residues 40 to 49 (KGRRHRPSRS) show a composition bias toward basic residues. Phosphoserine is present on residues S84 and S108. Residues 138–153 (SGSPPRSAPSSDSSPS) are compositionally biased toward low complexity. Basic and acidic residues predominate over residues 159 to 173 (PRAEPHSEDDSRDAS). A phosphoserine mark is found at S173 and S179. Low complexity-rich tracts occupy residues 244 to 260 (SGKGSASSGSTTSPTCS) and 276 to 289 (STLSDDSTPPSSSP). A Phosphoserine modification is found at S279. T283 is subject to Phosphothreonine. Residues 326–389 (WTSQQVGQWL…KRKLKELAAA (64 aa)) form the SAM domain. The stretch at 375–416 (DRALVKRKLKELAAAAEKERKAQEKTARQREKLRRREHEAKK) forms a coiled coil. The disordered stretch occupies residues 390-417 (AEKERKAQEKTARQREKLRRREHEAKKS).

The sequence is that of Sterile alpha motif domain-containing protein 14 (Samd14) from Rattus norvegicus (Rat).